The sequence spans 183 residues: Dual-action ribosomal maturation protein DarP (183 aa).

It belongs to the DarP family.

Its subcellular location is the cytoplasm. Functionally, member of a network of 50S ribosomal subunit biogenesis factors which assembles along the 30S-50S interface, preventing incorrect 23S rRNA structures from forming. Promotes peptidyl transferase center (PTC) maturation. The sequence is that of Dual-action ribosomal maturation protein DarP from Salmonella paratyphi A (strain ATCC 9150 / SARB42).